The primary structure comprises 1273 residues: ABC transporter B family member 2 (1273 aa).

An N-terminal signal peptide occupies residues M1–P30. The next 7 helical transmembrane spans lie at F66–I86, V91–F111, F126–H146, F209–S229, I230–A250, G305–F325, and L345–V365. The 290-residue stretch at M77–R366 folds into the ABC transmembrane type-1 1 domain. One can recognise an ABC transporter 1 domain in the interval I401–R637. G436–S443 provides a ligand contact to ATP. 2 N-linked (GlcNAc...) asparagine glycosylation sites follow: N466 and N651. Positions G710–K997 constitute an ABC transmembrane type-1 2 domain. 2 helical membrane-spanning segments follow: residues V711–V731 and I752–I772. The N-linked (GlcNAc...) asparagine glycan is linked to N806. Helical transmembrane passes span I832–W852, I934–L954, and F975–L995. Positions I1030 to S1266 constitute an ABC transporter 2 domain. An ATP-binding site is contributed by G1065 to S1072. N-linked (GlcNAc...) asparagine glycans are attached at residues N1217 and N1256.

It belongs to the ABC transporter superfamily. ABCB family. Multidrug resistance exporter (TC 3.A.1.201) subfamily. In terms of assembly, interacts with 1-naphthylphthalamic acid (NPA).

It is found in the membrane. The sequence is that of ABC transporter B family member 2 (ABCB2) from Arabidopsis thaliana (Mouse-ear cress).